Here is an 805-residue protein sequence, read N- to C-terminus: Rho GTPase-activating protein 42 (805 aa).

The BAR domain maps to 7–262; that stretch reads EFSDSFLDSP…IRSAEQDFKA (256 aa). Residues 225 to 262 are a coiled coil; the sequence is KQQLQFNLQNTRNNFESTRQEVENLMRRIRSAEQDFKA. The 110-residue stretch at 265–374 folds into the PH domain; the sequence is QWTMEGFLYV…WMEAMDGKEP (110 aa). The 197-residue stretch at 376-572 folds into the Rho-GAP domain; sequence YTLPALLSKK…ILIENYDKIF (197 aa). Disordered stretches follow at residues 576 to 600, 625 to 725, and 765 to 805; these read PDPN…RSKA, SDTF…SELL, and VSRS…PGSV. Over residues 626–654 the composition is skewed to low complexity; the sequence is DTFSSSPSSTPMGSMESLSSHSSEQNSCS. Residues 670 to 693 are compositionally biased toward polar residues; that stretch reads LCWTTPSPSTNGPKSPACTTSPDS. Basic and acidic residues predominate over residues 694-704; it reads SSKEDANKTDG. Positions 710–721 are enriched in polar residues; sequence LSTSPGDRSSPA. Basic and acidic residues predominate over residues 782–793; the sequence is PPKDGMRFRDDS.

May influence blood pressure by functioning as a GTPase-activating protein in vascular smooth muscle. The chain is Rho GTPase-activating protein 42 from Danio rerio (Zebrafish).